The sequence spans 304 residues: Acetylglutamate kinase (304 aa).

Substrate-binding positions include 72 to 73 (GG), R94, and N199.

It belongs to the acetylglutamate kinase family. ArgB subfamily.

Its subcellular location is the cytoplasm. The catalysed reaction is N-acetyl-L-glutamate + ATP = N-acetyl-L-glutamyl 5-phosphate + ADP. Its pathway is amino-acid biosynthesis; L-arginine biosynthesis; N(2)-acetyl-L-ornithine from L-glutamate: step 2/4. Its function is as follows. Catalyzes the ATP-dependent phosphorylation of N-acetyl-L-glutamate. The protein is Acetylglutamate kinase of Methylobacterium nodulans (strain LMG 21967 / CNCM I-2342 / ORS 2060).